Consider the following 1178-residue polypeptide: Thrombospondin-2 (1178 aa).

An N-terminal signal peptide occupies residues methionine 1 to alanine 22. Residues aspartate 25–threonine 221 enclose the Laminin G-like domain. Residues asparagine 157, asparagine 244, asparagine 317, and asparagine 322 are each glycosylated (N-linked (GlcNAc...) asparagine). Positions serine 324–serine 381 constitute a VWFC domain. TSP type-1 domains lie at glutamate 387 to aspartate 437, aspartate 443 to proline 498, and asparagine 500 to proline 555. Cystine bridges form between cysteine 399–cysteine 431, cysteine 403–cysteine 436, cysteine 414–cysteine 421, cysteine 455–cysteine 492, cysteine 459–cysteine 497, cysteine 470–cysteine 482, cysteine 512–cysteine 549, cysteine 516–cysteine 554, cysteine 527–cysteine 539, cysteine 559–cysteine 570, cysteine 564–cysteine 580, cysteine 583–cysteine 594, cysteine 600–cysteine 616, cysteine 607–cysteine 625, cysteine 628–cysteine 652, cysteine 658–cysteine 671, cysteine 665–cysteine 684, cysteine 686–cysteine 697, cysteine 713–cysteine 721, cysteine 726–cysteine 746, cysteine 762–cysteine 782, cysteine 785–cysteine 805, cysteine 821–cysteine 841, cysteine 844–cysteine 864, cysteine 882–cysteine 902, cysteine 918–cysteine 938, and cysteine 954–cysteine 1175. N-linked (GlcNAc...) asparagine glycosylation is present at asparagine 463. An EGF-like 1 domain is found at proline 555–glutamate 595. An N-linked (GlcNAc...) asparagine glycan is attached at asparagine 590. The EGF-like 2 domain occupies proline 654–glycine 698. TSP type-3 repeat units follow at residues glutamate 699–glutamine 734, glutamate 735–glutamine 770, phenylalanine 771–glutamine 793, isoleucine 794–glutamine 829, serine 830–glutamine 852, threonine 853–glutamine 890, alanine 891–glutamine 926, and glutamate 927–glutamate 962. The N-linked (GlcNAc...) asparagine glycan is linked to asparagine 716. Positions phenylalanine 737–aspartate 760 are disordered. The span at cysteine 746–lysine 759 shows a compositional bias: acidic residues. The disordered stretch occupies residues glutamine 852 to aspartate 941. Over residues threonine 853 to glutamate 872 the composition is skewed to acidic residues. The span at alanine 891–alanine 901 shows a compositional bias: basic and acidic residues. Positions cysteine 902–isoleucine 911 are enriched in acidic residues. 2 stretches are compositionally biased toward basic and acidic residues: residues proline 912–proline 924 and glycine 931–aspartate 940. The Cell attachment site motif lies at arginine 934–aspartate 936. The TSP C-terminal domain occupies arginine 966–alanine 1178. Asparagine 1075 is a glycosylation site (N-linked (GlcNAc...) asparagine).

The protein belongs to the thrombospondin family. Homotrimer; disulfide-linked. Can bind to fibrinogen, fibronectin, laminin and type V collagen.

Its function is as follows. Adhesive glycoprotein that mediates cell-to-cell and cell-to-matrix interactions. The polypeptide is Thrombospondin-2 (THBS2) (Gallus gallus (Chicken)).